Consider the following 1524-residue polypeptide: DNA-directed RNA polymerase subunit beta' (1524 aa).

Zn(2+) contacts are provided by cysteine 58, cysteine 60, cysteine 73, and cysteine 76. Mg(2+) contacts are provided by aspartate 739, aspartate 741, and aspartate 743. Residues cysteine 1112, cysteine 1194, cysteine 1201, and cysteine 1204 each contribute to the Zn(2+) site. Residues 1501-1524 (EAVEAKERPAARRGVKREQPGKQA) are disordered.

This sequence belongs to the RNA polymerase beta' chain family. As to quaternary structure, the RNAP catalytic core consists of 2 alpha, 1 beta, 1 beta' and 1 omega subunit. When a sigma factor is associated with the core the holoenzyme is formed, which can initiate transcription. Mg(2+) serves as cofactor. The cofactor is Zn(2+).

It carries out the reaction RNA(n) + a ribonucleoside 5'-triphosphate = RNA(n+1) + diphosphate. In terms of biological role, DNA-dependent RNA polymerase catalyzes the transcription of DNA into RNA using the four ribonucleoside triphosphates as substrates. This chain is DNA-directed RNA polymerase subunit beta', found in Thermus thermophilus (strain ATCC BAA-163 / DSM 7039 / HB27).